An 840-amino-acid polypeptide reads, in one-letter code: Heat shock 70 kDa protein 4 (840 aa).

Lysine 53 carries the post-translational modification N6-acetyllysine. At serine 76 the chain carries Phosphoserine. A phosphotyrosine mark is found at tyrosine 89 and tyrosine 336. Phosphoserine occurs at positions 393 and 415. The residue at position 430 (lysine 430) is an N6-acetyllysine. A disordered region spans residues 500–575; sequence VHKSEENEEP…QAKKAKVKTS (76 aa). Basic and acidic residues predominate over residues 514–533; that stretch reads QNAKEEEKMQVDQEEPHVEE. Threonine 538 is modified (phosphothreonine). Phosphoserine is present on residues serine 546 and serine 647. Residue tyrosine 660 is modified to Phosphotyrosine. Lysine 679 carries the post-translational modification N6-acetyllysine. Phosphoserine is present on serine 756. The residue at position 773 (lysine 773) is an N6-methyllysine. Residues 779 to 840 are disordered; sequence CSPIISKPKP…DKKLPEMDID (62 aa). Composition is skewed to basic and acidic residues over residues 788–799 and 829–840; these read PKVEPPKEEQKN and DSDKKLPEMDID.

This sequence belongs to the heat shock protein 70 family. Interacts with TJP1/ZO-1.

The protein resides in the cytoplasm. The polypeptide is Heat shock 70 kDa protein 4 (HSPA4) (Homo sapiens (Human)).